Consider the following 336-residue polypeptide: Tetraacyldisaccharide 4'-kinase (336 aa).

60–67 (TAGGNGKT) contacts ATP.

Belongs to the LpxK family.

It catalyses the reaction a lipid A disaccharide + ATP = a lipid IVA + ADP + H(+). It participates in glycolipid biosynthesis; lipid IV(A) biosynthesis; lipid IV(A) from (3R)-3-hydroxytetradecanoyl-[acyl-carrier-protein] and UDP-N-acetyl-alpha-D-glucosamine: step 6/6. Its function is as follows. Transfers the gamma-phosphate of ATP to the 4'-position of a tetraacyldisaccharide 1-phosphate intermediate (termed DS-1-P) to form tetraacyldisaccharide 1,4'-bis-phosphate (lipid IVA). This chain is Tetraacyldisaccharide 4'-kinase, found in Vibrio cholerae serotype O1 (strain ATCC 39315 / El Tor Inaba N16961).